Consider the following 416-residue polypeptide: Tyrosine-protein phosphatase non-receptor type 2 (416 aa).

Residues 5–275 (IEREFEELDA…RFSYMAIIEG (271 aa)) form the Tyrosine-protein phosphatase domain. At Tyr22 the chain carries Phosphotyrosine. Ser52 bears the Phosphoserine mark. The residue at position 68 (Tyr68) is a Phosphotyrosine. Residues Asp182, 216-222 (CSAGIGR), and Gln260 each bind substrate. The Phosphocysteine intermediate role is filled by Cys216. Cys216 is modified (S-nitrosocysteine). Ser293, Ser298, Ser304, Ser320, and Ser339 each carry phosphoserine. The segment at 341 to 410 (ESILRKRIRE…WTLLFQLNVL (70 aa)) is endoplasmic reticulum location. Residues 371–410 (ERKRKRWLYWQPILTKMGFVSVILVGALVGWTLLFQLNVL) form a may mediate interaction with STX17 region.

This sequence belongs to the protein-tyrosine phosphatase family. Non-receptor class 1 subfamily. In terms of assembly, interacts with RMDN3. Interacts with TMED9. Interacts with STX17; dephosphorylates STX17. Interacts with ITGA1 (via cytoplasmic domain); activates the phosphatase activity towards EGFR. Interacts with TRAF2; probably involved in tumor necrosis factor-mediated signaling. Interacts with MET. Interacts with FAM220A and STAT3; interaction with FAM220A promotes interaction of PTPN2 with transcriptional activator STAT3, leading to dephosphorylation of STAT3 by PTPN2 and negative regulation of STAT3 transcriptional activator activity. Specifically phosphorylated in a cell cycle-dependent manner by cyclin-dependent kinases CDK1 and CDK2. Probably activated through phosphorylation by PKR. Does not show tissue- or cell-type specificity although levels of transcription show variability. Macrophages showed higher levels of expression than lymphocytes.

It is found in the cytoplasm. The protein localises to the endoplasmic reticulum-Golgi intermediate compartment. Its subcellular location is the endoplasmic reticulum. The protein resides in the nucleus membrane. It localises to the nucleus. It is found in the cell membrane. It catalyses the reaction O-phospho-L-tyrosyl-[protein] + H2O = L-tyrosyl-[protein] + phosphate. Its function is as follows. Non-receptor type tyrosine-specific phosphatase that dephosphorylates receptor protein tyrosine kinases including INSR, EGFR, CSF1R, PDGFR. Also dephosphorylates non-receptor protein tyrosine kinases like JAK1, JAK2, JAK3, Src family kinases, STAT1, STAT3 and STAT6 either in the nucleus or the cytoplasm. Negatively regulates numerous signaling pathways and biological processes like hematopoiesis, inflammatory response, cell proliferation and differentiation, and glucose homeostasis. Plays a multifaceted and important role in the development of the immune system. Functions in T-cell receptor signaling through dephosphorylation of FYN and LCK to control T-cells differentiation and activation. Dephosphorylates CSF1R, negatively regulating its downstream signaling and macrophage differentiation. Negatively regulates cytokine (IL2/interleukin-2 and interferon)-mediated signaling through dephosphorylation of the cytoplasmic kinases JAK1, JAK3 and their substrate STAT1, that propagate signaling downstream of the cytokine receptors. Also regulates the IL6/interleukin-6 and IL4/interleukin-4 cytokine signaling through dephosphorylation of STAT3 and STAT6 respectively. In addition to the immune system, it is involved in anchorage-dependent, negative regulation of EGF-stimulated cell growth. Activated by the integrin ITGA1/ITGB1, it dephosphorylates EGFR and negatively regulates EGF signaling. Dephosphorylates PDGFRB and negatively regulates platelet-derived growth factor receptor-beta signaling pathway and therefore cell proliferation. Negatively regulates tumor necrosis factor-mediated signaling downstream via MAPK through SRC dephosphorylation. May also regulate the hepatocyte growth factor receptor signaling pathway through dephosphorylation of the hepatocyte growth factor receptor MET. Also plays an important role in glucose homeostasis. For instance, negatively regulates the insulin receptor signaling pathway through the dephosphorylation of INSR and control gluconeogenesis and liver glucose production through negative regulation of the IL6 signaling pathways. May also bind DNA. This is Tyrosine-protein phosphatase non-receptor type 2 (Ptpn2) from Rattus norvegicus (Rat).